Here is a 204-residue protein sequence, read N- to C-terminus: Ras-related protein RabL (204 aa).

Position 14-21 (14-21) interacts with GTP; sequence GDSNVGKT. An Effector region motif is present at residues 36 to 44; that stretch reads RPPSIGPDY. GTP contacts are provided by residues 62–66 and 120–123; these read DTCGQ and TKSD. 2 S-geranylgeranyl cysteine lipidation sites follow: Cys-203 and Cys-204.

Belongs to the small GTPase superfamily. Rab family.

It is found in the cell membrane. This Dictyostelium discoideum (Social amoeba) protein is Ras-related protein RabL (rabL).